A 180-amino-acid polypeptide reads, in one-letter code: MGDCNISTSDNKQNRKNHEIRVPRVRVIGSDGEMVGVLSRDEALAMAEKEGLDLVEIQPQADPPVCKVMNFGKFKFEQQKKANEAKKKTKQVEIKELKFRPVTDEGDYQIKLRNMRRFLEEGDKVKINIRFRGREMSHQELGRQMATRIEMDLGDDVVIESRPRLEGRQMVMMVAPRKKS.

This sequence belongs to the IF-3 family. Monomer.

The protein resides in the cytoplasm. Its function is as follows. IF-3 binds to the 30S ribosomal subunit and shifts the equilibrium between 70S ribosomes and their 50S and 30S subunits in favor of the free subunits, thus enhancing the availability of 30S subunits on which protein synthesis initiation begins. This Xylella fastidiosa (strain 9a5c) protein is Translation initiation factor IF-3.